The sequence spans 228 residues: UPF0758 protein NT01CX_1687 (228 aa).

One can recognise an MPN domain in the interval 106–228 (IIKSPGDVAG…YISLKEKNIL (123 aa)). Zn(2+)-binding residues include H177, H179, and D190. The JAMM motif motif lies at 177 to 190 (HNHPSGDPTPSSED).

This sequence belongs to the UPF0758 family.

The polypeptide is UPF0758 protein NT01CX_1687 (Clostridium novyi (strain NT)).